Here is a 314-residue protein sequence, read N- to C-terminus: Thymidylate synthase (314 aa).

DUMP contacts are provided by residues Arg-21 and 176–177 (RR). Residue Cys-196 is the Nucleophile of the active site. DUMP is bound by residues 216 to 219 (RSAD), Asn-227, and 257 to 259 (HLY). Residue Asp-219 coordinates (6R)-5,10-methylene-5,6,7,8-tetrahydrofolate. Ser-313 lines the (6R)-5,10-methylene-5,6,7,8-tetrahydrofolate pocket.

It belongs to the thymidylate synthase family. Bacterial-type ThyA subfamily. As to quaternary structure, homodimer.

It localises to the cytoplasm. It carries out the reaction dUMP + (6R)-5,10-methylene-5,6,7,8-tetrahydrofolate = 7,8-dihydrofolate + dTMP. It functions in the pathway pyrimidine metabolism; dTTP biosynthesis. In terms of biological role, catalyzes the reductive methylation of 2'-deoxyuridine-5'-monophosphate (dUMP) to 2'-deoxythymidine-5'-monophosphate (dTMP) while utilizing 5,10-methylenetetrahydrofolate (mTHF) as the methyl donor and reductant in the reaction, yielding dihydrofolate (DHF) as a by-product. This enzymatic reaction provides an intracellular de novo source of dTMP, an essential precursor for DNA biosynthesis. In Listeria monocytogenes serovar 1/2a (strain ATCC BAA-679 / EGD-e), this protein is Thymidylate synthase.